Here is a 206-residue protein sequence, read N- to C-terminus: Translation initiation factor IF-3 (206 aa).

Belongs to the IF-3 family. In terms of assembly, monomer.

The protein resides in the cytoplasm. IF-3 binds to the 30S ribosomal subunit and shifts the equilibrium between 70S ribosomes and their 50S and 30S subunits in favor of the free subunits, thus enhancing the availability of 30S subunits on which protein synthesis initiation begins. The chain is Translation initiation factor IF-3 from Chlorobium luteolum (strain DSM 273 / BCRC 81028 / 2530) (Pelodictyon luteolum).